The sequence spans 473 residues: ATP synthase subunit beta, chloroplastic (473 aa).

172–179 (GGAGVGKT) lines the ATP pocket.

This sequence belongs to the ATPase alpha/beta chains family. F-type ATPases have 2 components, CF(1) - the catalytic core - and CF(0) - the membrane proton channel. CF(1) has five subunits: alpha(3), beta(3), gamma(1), delta(1), epsilon(1). CF(0) has four main subunits: a(1), b(1), b'(1) and c(9-12).

Its subcellular location is the plastid. The protein localises to the chloroplast thylakoid membrane. The enzyme catalyses ATP + H2O + 4 H(+)(in) = ADP + phosphate + 5 H(+)(out). Its function is as follows. Produces ATP from ADP in the presence of a proton gradient across the membrane. The catalytic sites are hosted primarily by the beta subunits. The sequence is that of ATP synthase subunit beta, chloroplastic from Pteridium esculentum (Bracken fern).